We begin with the raw amino-acid sequence, 452 residues long: MYPGAGRPTYHKQQEQKGPYGQPQYQQQYAPPYPERYQQPYYQPPPHDGYSRPSMPPPSHNYAAAQYERPSCPPPGYAPHQGGFPAPGPPLQGRPRDLMRSDIQMNHSMDYSNIQGPASYTRPEFVAPPPQERQFLDPGNRSVEYQYSQCTGNRKALLIGINYFNSSAELRGCINDVQNIKNFLISRYGYREENMVILTDDQHDPVRIPTKANILRAMHWLVQGAQPNDSLFLHYSGHGGETEDLDGDEQDGKDSTLYPVDFETNGHIVDDEIHDILVKPLAPGVRLTALIDACHSGSALDLPYMYSTKGIIKEPNVWKDIGSNSMQAAMAYVTGNTGDMFTSLKSLASTVSRKATGSGGVDTERVRQTKFSPADVIMFSGSKDNQTSADAVENGVATGAMSYSFVKVMSQQPQQTYLSLLQNMRTELKGKYTQKPQLSCSHPLDVNLQFVL.

Residues 1–97 (MYPGAGRPTY…GPPLQGRPRD (97 aa)) form a disordered region. The span at 16-41 (QKGPYGQPQYQQQYAPPYPERYQQPY) shows a compositional bias: low complexity. Catalysis depends on residues histidine 238 and cysteine 294.

It belongs to the peptidase C14B family.

Involved in cell death (apoptosis). The polypeptide is Metacaspase-1 (MCA1) (Eremothecium gossypii (strain ATCC 10895 / CBS 109.51 / FGSC 9923 / NRRL Y-1056) (Yeast)).